The sequence spans 380 residues: MANLRKTHPLIKIMNDALVDLPAPSNISVWWNFGSLLGLCLITQILTGLFLAMHYTSDISTAFSSVAHICRDVNYGWLIRNLHANGASFFFICMYLHVARGLYYGSYAYKETWNIGVILLLLVMMTAFVGYVLPWGQMSFWGATVITNLLSAVPYVGDALVQWIWGGFSVDNATLTRFFAFHFILPFIVAAAVILHLLFLHETGSNNPMGLNSDTDKVYFHPYFSYKDILGFIVMLLALITLALFSPNLLGDPENFTPANPLVTPPHIKPEWYFLFAYAILRSIPNKLGGVLALLFSILVLMIVPILHTSKMQTLTFRPFSQFLFWVLVADMLILTWIGGMPVELPFIIIGQIASILYFTLFLLLIPMAGLMENKMLSLK.

4 helical membrane passes run 33 to 53, 77 to 98, 113 to 133, and 178 to 198; these read FGSL…FLAM, WLIR…YLHV, WNIG…GYVL, and FFAF…LHLL. Residues H83 and H97 each coordinate heme b. 2 residues coordinate heme b: H182 and H196. H201 contacts a ubiquinone. Transmembrane regions (helical) follow at residues 226 to 246, 288 to 308, 320 to 340, and 347 to 367; these read YKDI…ALFS, LGGV…PILH, FSQF…WIGG, and FIII…LLIP.

Belongs to the cytochrome b family. The cytochrome bc1 complex contains 3 respiratory subunits (MT-CYB, CYC1 and UQCRFS1), 2 core proteins (UQCRC1 and UQCRC2) and probably 6 low-molecular weight proteins. The cofactor is heme b.

It localises to the mitochondrion inner membrane. In terms of biological role, component of the ubiquinol-cytochrome c reductase complex (complex III or cytochrome b-c1 complex) that is part of the mitochondrial respiratory chain. The b-c1 complex mediates electron transfer from ubiquinol to cytochrome c. Contributes to the generation of a proton gradient across the mitochondrial membrane that is then used for ATP synthesis. The chain is Cytochrome b (mt-cyb) from Arapaima gigas (Arapaima).